A 437-amino-acid polypeptide reads, in one-letter code: Septin-7 (437 aa).

Serine 2 carries the N-acetylserine modification. Phosphotyrosine is present on tyrosine 30. Positions 47–316 (RGFEFTLMVV…ENYRSRKLAA (270 aa)) constitute a Septin-type G domain. Residues 47–317 (RGFEFTLMVV…NYRSRKLAAV (271 aa)) form an interaction with SEPTIN12 region. A G1 motif region spans residues 57 to 64 (GESGLGKS). 57-64 (GESGLGKS) provides a ligand contact to GTP. The residue at position 77 (serine 77) is a Phosphoserine. Residues threonine 90, glycine 116, and 195–203 (KADTLTPEE) each bind GTP. The interval 113-116 (DTPG) is G3 motif. Positions 194-197 (AKAD) are G4 motif. Phosphothreonine is present on threonine 228. GTP contacts are provided by glycine 250 and arginine 265. Positions 332–433 (TKSPLAQMEE…SRTLEKNKKK (102 aa)) form a coiled coil. At serine 334 the chain carries Phosphoserine. Lysine 373 bears the N6-acetyllysine mark. The span at 378 to 410 (ELQRRHEQMKKNLEAQHKELEEKRRQFEDEKAN) shows a compositional bias: basic and acidic residues. The tract at residues 378–437 (ELQRRHEQMKKNLEAQHKELEEKRRQFEDEKANWEAQQRILEQQNSSRTLEKNKKKGKIF) is disordered. Serine 424 carries the phosphoserine modification. A Phosphothreonine modification is found at threonine 426.

This sequence belongs to the TRAFAC class TrmE-Era-EngA-EngB-Septin-like GTPase superfamily. Septin GTPase family. In terms of assembly, septins polymerize into heterooligomeric protein complexes that form filaments, and associate with cellular membranes, actin filaments and microtubules. GTPase activity is required for filament formation. Filaments are assembled from asymmetrical heterotrimers, composed of SEPTIN2, SEPTIN6 and SEPTIN7 that associate head-to-head to form a hexameric unit. Within the trimer, directly interacts with SEPTIN6, while interaction with SEPTIN2 seems indirect. In the absence of SEPTIN6, forms homodimers. Interacts directly with CENPE and links CENPE to septin filaments composed of SEPTIN2, SEPTIN6 and SEPTIN7. Interacts with SEPTIN5, SEPTIN8, SEPTIN9 and SEPTIN11. Component of a septin core octameric complex consisting of SEPTIN12, SEPTIN7, SEPTIN6 and SEPTIN2 or SEPTIN4 in the order 12-7-6-2-2-6-7-12 or 12-7-6-4-4-6-7-12 and located in the sperm annulus; the SEPTIN12:SEPTIN7 association is mediated by the respective GTP-binding domains.

Its subcellular location is the cytoplasm. The protein localises to the chromosome. It localises to the centromere. It is found in the kinetochore. The protein resides in the cytoskeleton. Its subcellular location is the spindle. The protein localises to the cleavage furrow. It localises to the midbody. It is found in the cilium axoneme. The protein resides in the cell projection. Its subcellular location is the cilium. The protein localises to the flagellum. Its function is as follows. Filament-forming cytoskeletal GTPase. Required for normal organization of the actin cytoskeleton. Required for normal progress through mitosis. Involved in cytokinesis. Required for normal association of CENPE with the kinetochore. Plays a role in ciliogenesis and collective cell movements. Forms a filamentous structure with SEPTIN12, SEPTIN6, SEPTIN2 and probably SEPTIN4 at the sperm annulus which is required for the structural integrity and motility of the sperm tail during postmeiotic differentiation. The sequence is that of Septin-7 from Bos taurus (Bovine).